Consider the following 344-residue polypeptide: Mitochondrial genome maintenance exonuclease 1 (344 aa).

Catalysis depends on residues aspartate 238, aspartate 251, and lysine 253. Residue serine 343 is modified to Phosphoserine.

This sequence belongs to the MGME1 family.

Its subcellular location is the mitochondrion. In terms of biological role, metal-dependent single-stranded DNA (ssDNA) exonuclease involved in mitochondrial genome maintenance. Has preference for 5'-3' exonuclease activity but is also capable of endonuclease activity on linear substrates. Necessary for maintenance of proper 7S DNA levels. Probably involved in mitochondrial DNA (mtDNA) repair, possibly via the processing of displaced DNA containing Okazaki fragments during RNA-primed DNA synthesis on the lagging strand or via processing of DNA flaps during long-patch base excision repair. Specifically binds 5-hydroxymethylcytosine (5hmC)-containing DNA in stem cells. The polypeptide is Mitochondrial genome maintenance exonuclease 1 (Homo sapiens (Human)).